Reading from the N-terminus, the 380-residue chain is Queuine tRNA-ribosyltransferase (380 aa).

Asp96 functions as the Proton acceptor in the catalytic mechanism. Residues 96–100, Asp150, Gln193, and Gly220 contribute to the substrate site; that span reads DSGGF. The segment at 251–257 is RNA binding; the sequence is GVGAPDS. The Nucleophile role is filled by Asp270. An RNA binding; important for wobble base 34 recognition region spans residues 275-279; it reads TRIAR. Residues Cys308, Cys310, Cys313, and His339 each contribute to the Zn(2+) site.

The protein belongs to the queuine tRNA-ribosyltransferase family. Homodimer. Within each dimer, one monomer is responsible for RNA recognition and catalysis, while the other monomer binds to the replacement base PreQ1. Requires Zn(2+) as cofactor.

The catalysed reaction is 7-aminomethyl-7-carbaguanine + guanosine(34) in tRNA = 7-aminomethyl-7-carbaguanosine(34) in tRNA + guanine. Its pathway is tRNA modification; tRNA-queuosine biosynthesis. Its function is as follows. Catalyzes the base-exchange of a guanine (G) residue with the queuine precursor 7-aminomethyl-7-deazaguanine (PreQ1) at position 34 (anticodon wobble position) in tRNAs with GU(N) anticodons (tRNA-Asp, -Asn, -His and -Tyr). Catalysis occurs through a double-displacement mechanism. The nucleophile active site attacks the C1' of nucleotide 34 to detach the guanine base from the RNA, forming a covalent enzyme-RNA intermediate. The proton acceptor active site deprotonates the incoming PreQ1, allowing a nucleophilic attack on the C1' of the ribose to form the product. After dissociation, two additional enzymatic reactions on the tRNA convert PreQ1 to queuine (Q), resulting in the hypermodified nucleoside queuosine (7-(((4,5-cis-dihydroxy-2-cyclopenten-1-yl)amino)methyl)-7-deazaguanosine). The sequence is that of Queuine tRNA-ribosyltransferase from Streptococcus gordonii (strain Challis / ATCC 35105 / BCRC 15272 / CH1 / DL1 / V288).